We begin with the raw amino-acid sequence, 306 residues long: Ribonuclease Z (306 aa).

Positions 63, 65, 67, 68, 140, 211, and 269 each coordinate Zn(2+). Asp-67 (proton acceptor) is an active-site residue.

This sequence belongs to the RNase Z family. Homodimer. It depends on Zn(2+) as a cofactor.

It carries out the reaction Endonucleolytic cleavage of RNA, removing extra 3' nucleotides from tRNA precursor, generating 3' termini of tRNAs. A 3'-hydroxy group is left at the tRNA terminus and a 5'-phosphoryl group is left at the trailer molecule.. In terms of biological role, zinc phosphodiesterase, which displays some tRNA 3'-processing endonuclease activity. Probably involved in tRNA maturation, by removing a 3'-trailer from precursor tRNA. In Listeria welshimeri serovar 6b (strain ATCC 35897 / DSM 20650 / CCUG 15529 / CIP 8149 / NCTC 11857 / SLCC 5334 / V8), this protein is Ribonuclease Z.